A 193-amino-acid polypeptide reads, in one-letter code: Interferon lambda-3 (193 aa).

The first 19 residues, 1–19, serve as a signal peptide directing secretion; the sequence is MLLLLLPLLLAAVLTRTQA. Cystine bridges form between C35/C132, C69/C166, and C185/C192.

Belongs to the lambda interferon family.

It localises to the secreted. Functionally, cytokine with antiviral, antitumour and immunomodulatory activities. Plays a critical role in the antiviral host defense, predominantly in the epithelial tissues. Acts as a ligand for the heterodimeric class II cytokine receptor composed of IL10RB and IFNLR1, and receptor engagement leads to the activation of the JAK/STAT signaling pathway resulting in the expression of IFN-stimulated genes (ISG), which mediate the antiviral state. Has a restricted receptor distribution and therefore restricted targets: is primarily active in epithelial cells and this cell type-selective action is because of the epithelial cell-specific expression of its receptor IFNLR1. Seems not to be essential for early virus-activated host defense in vaginal infection, but plays an important role in Toll-like receptor (TLR)-induced antiviral defense. Plays a significant role in the antiviral immune defense in the intestinal epithelium. Exerts an immunomodulatory effect by up-regulating MHC class I antigen expression. The protein is Interferon lambda-3 (Ifnl3) of Mus musculus (Mouse).